A 372-amino-acid chain; its full sequence is Heat-inducible transcription repressor HrcA (372 aa).

Residues 300-334 (YGRSGAAGEPAGNDPVGEPETESETESQTNDTEPI) form a disordered region.

Belongs to the HrcA family.

Its function is as follows. Negative regulator of class I heat shock genes (grpE-dnaK-dnaJ and groELS operons). Prevents heat-shock induction of these operons. The sequence is that of Heat-inducible transcription repressor HrcA from Bifidobacterium longum (strain DJO10A).